The chain runs to 101 residues: Small ribosomal subunit protein uS14 (101 aa).

Belongs to the universal ribosomal protein uS14 family. In terms of assembly, part of the 30S ribosomal subunit. Contacts proteins S3 and S10.

Its function is as follows. Binds 16S rRNA, required for the assembly of 30S particles and may also be responsible for determining the conformation of the 16S rRNA at the A site. The chain is Small ribosomal subunit protein uS14 from Rhizorhabdus wittichii (strain DSM 6014 / CCUG 31198 / JCM 15750 / NBRC 105917 / EY 4224 / RW1) (Sphingomonas wittichii).